The primary structure comprises 347 residues: S-adenosylmethionine:tRNA ribosyltransferase-isomerase (347 aa).

Belongs to the QueA family. In terms of assembly, monomer.

It is found in the cytoplasm. The catalysed reaction is 7-aminomethyl-7-carbaguanosine(34) in tRNA + S-adenosyl-L-methionine = epoxyqueuosine(34) in tRNA + adenine + L-methionine + 2 H(+). It functions in the pathway tRNA modification; tRNA-queuosine biosynthesis. Functionally, transfers and isomerizes the ribose moiety from AdoMet to the 7-aminomethyl group of 7-deazaguanine (preQ1-tRNA) to give epoxyqueuosine (oQ-tRNA). This is S-adenosylmethionine:tRNA ribosyltransferase-isomerase from Streptococcus thermophilus (strain ATCC BAA-491 / LMD-9).